Reading from the N-terminus, the 338-residue chain is mRNA decay activator protein ZFP36L1 (338 aa).

The segment at Met-1 to Asn-111 is necessary and sufficient for the association with mRNA decay enzymes and mRNA decay activation. Ser-54 is modified (phosphoserine; by MAPKAPK2). The segment at Leu-71–Ser-113 is disordered. The span at Arg-82 to Glu-96 shows a compositional bias: basic and acidic residues. At Ser-90 the chain carries Phosphoserine; by PKB/AKT1. The residue at position 92 (Ser-92) is a Phosphoserine; by PKB/AKT1 and MAPKAPK2. The segment covering Thr-101–Ser-113 has biased composition (polar residues). 2 C3H1-type zinc fingers span residues Arg-114 to His-142 and Lys-152 to Glu-180. Residues Leu-185–Asp-338 are necessary for mRNA decay activation. Ser-203 carries the phosphoserine; by PKB/AKT1 and MAPKAPK2 modification. The segment at Ser-273–Asp-338 is disordered. Residues Tyr-305 to Ser-318 show a composition bias toward low complexity. Ser-318 carries the post-translational modification Phosphoserine. Ser-334 is subject to Phosphoserine; by RPS6KA1.

As to quaternary structure, associates with the cytoplasmic CCR4-NOT deadenylase and RNA exosome complexes to trigger ARE-containing mRNA deadenylation and decay processes. Interacts with CNOT1. Interacts (via N-terminus) with CNOT6. Interacts with CNOT7; this interaction is inhibited in response to phorbol 12-myristate 13-acetate (PMA) treatment in a p38 MAPK-dependent manner. Interacts with DCP1A. Interacts (via N-terminus) with DCP2. Interacts (via N-terminus) with EXOSC2. Interacts with XRN1. Interacts (via phosphorylated form) with YWHAB; this interaction occurs in a protein kinase AKT1-dependent manner. Interacts (via phosphorylated form) with YWHAZ; this interaction occurs in a p38 MAPK- and AKT-signaling pathways. In terms of processing, phosphorylated. Phosphorylated by RPS6KA1 at Ser-334 upon phorbol 12-myristate 13-acetate (PMA) treatment; this phosphorylation results in dissociation of the CCR4-NOT deadenylase complex and induces p38 MAPK-mediated stabilization of the low-density lipoprotein receptor LDLR mRNA. Phosphorylated by protein kinase AKT1 at Ser-92 and Ser-203 in response to insulin; these phosphorylations stabilize ZFP36L1, increase the association with 14-3-3 proteins and mediate ARE-containing mRNA stabilization. AKT1-mediated phosphorylation at Ser-92 does not impair ARE-containing RNA-binding. Phosphorylated at Ser-54, Ser-92 and Ser-203 by MAPKAPK2; these phosphorylations increase the association with 14-3-3 proteins and mediate ARE-containing mRNA stabilization in a protein kinase AKT1-independent manner. MAPKAPK2-mediated phosphorylations at Ser-54, Ser-92 and Ser-203 do not impair ARE-containing RNA-binding. Phosphorylations increase the association with 14-3-3 proteins and mediate ARE-containing mRNA stabilization during early adipogenesis in a p38 MAPK- and AKT-dependent manner. Ubiquitinated. Ubiquitination leads to proteasomal degradation, a process inhibited by phosphorylations at Ser-90, Ser-92 and Ser-203. Expressed in preadipocytes and adipocytes. Expressed in the proximal and distal tubules in the renal cortex (at protein level). Expressed in ovary, heart, kidney, lung, spleen and thymus. Weakly expressed in brain, liver and testis. Expressed in osteoblasts. Expressed in embryonic stem cells (ESCs). Expressed through B lymphocyte development.

The protein resides in the nucleus. Its subcellular location is the cytoplasm. It is found in the cytoplasmic granule. The protein localises to the P-body. In terms of biological role, zinc-finger RNA-binding protein that destabilizes several cytoplasmic AU-rich element (ARE)-containing mRNA transcripts by promoting their poly(A) tail removal or deadenylation, and hence provide a mechanism for attenuating protein synthesis. Acts as a 3'-untranslated region (UTR) ARE mRNA-binding adapter protein to communicate signaling events to the mRNA decay machinery. Functions by recruiting the CCR4-NOT deadenylating complex and components of the cytoplasmic RNA decay machinery to the bound ARE-containing mRNAs, and hence promotes ARE-mediated mRNA deadenylation and decay processes. Also induces the degradation of ARE-containing mRNAs even in absence of poly(A) tail. Binds to 3'-UTR ARE of numerous mRNAs. Positively regulates early adipogenesis by promoting ARE-mediated mRNA decay of immediate early genes (IEGs). Promotes ARE-mediated mRNA decay of mineralocorticoid receptor NR3C2 mRNA in response to hypertonic stress. Negatively regulates hematopoietic/erythroid cell differentiation by promoting ARE-mediated mRNA decay of the transcription factor STAT5B mRNA. Positively regulates monocyte/macrophage cell differentiation by promoting ARE-mediated mRNA decay of the cyclin-dependent kinase CDK6 mRNA. Promotes degradation of ARE-containing pluripotency-associated mRNAs in embryonic stem cells (ESCs), such as NANOG, through a fibroblast growth factor (FGF)-induced MAPK-dependent signaling pathway, and hence attenuates ESC self-renewal and positively regulates mesendoderm differentiation. May play a role in mediating pro-apoptotic effects in malignant B-cells by promoting ARE-mediated mRNA decay of BCL2 mRNA. In association with ZFP36L2 maintains quiescence on developing B lymphocytes by promoting ARE-mediated decay of several mRNAs encoding cell cycle regulators that help B cells progress through the cell cycle, and hence ensuring accurate variable-diversity-joining (VDJ) recombination and functional immune cell formation. Together with ZFP36L2 is also necessary for thymocyte development and prevention of T-cell acute lymphoblastic leukemia (T-ALL) transformation by promoting ARE-mediated mRNA decay of the oncogenic transcription factor NOTCH1 mRNA. Involved in the delivery of target ARE-mRNAs to processing bodies (PBs). In addition to its cytosolic mRNA-decay function, plays a role in the regulation of nuclear mRNA 3'-end processing; modulates mRNA 3'-end maturation efficiency of the DLL4 mRNA through binding with an ARE embedded in a weak noncanonical polyadenylation (poly(A)) signal in endothelial cells. Also involved in the regulation of stress granule (SG) and P-body (PB) formation and fusion. Plays a role in vasculogenesis and endocardial development. Involved in the regulation of keratinocyte proliferation, differentiation and apoptosis. Plays a role in myoblast cell differentiation. This Mus musculus (Mouse) protein is mRNA decay activator protein ZFP36L1.